A 351-amino-acid polypeptide reads, in one-letter code: 3-dehydroquinate synthase (351 aa).

NAD(+) is bound by residues 126 to 127 (TT), K138, and K147. Zn(2+) contacts are provided by E180, H244, and H260.

This sequence belongs to the sugar phosphate cyclases superfamily. Dehydroquinate synthase family. The cofactor is Co(2+). Zn(2+) is required as a cofactor. Requires NAD(+) as cofactor.

It localises to the cytoplasm. The enzyme catalyses 7-phospho-2-dehydro-3-deoxy-D-arabino-heptonate = 3-dehydroquinate + phosphate. The protein operates within metabolic intermediate biosynthesis; chorismate biosynthesis; chorismate from D-erythrose 4-phosphate and phosphoenolpyruvate: step 2/7. Functionally, catalyzes the conversion of 3-deoxy-D-arabino-heptulosonate 7-phosphate (DAHP) to dehydroquinate (DHQ). This Exiguobacterium sp. (strain ATCC BAA-1283 / AT1b) protein is 3-dehydroquinate synthase.